Here is a 353-residue protein sequence, read N- to C-terminus: Anthranilate phosphoribosyltransferase (353 aa).

Residues G86, 89–90, 96–99, 114–122, and S126 each bind 5-phospho-alpha-D-ribose 1-diphosphate; these read GD, NVST, and KHGNRAVSG. Anthranilate is bound at residue G86. Residue S98 participates in Mg(2+) binding. Residue N117 coordinates anthranilate. Position 172 (R172) interacts with anthranilate. Mg(2+) is bound by residues D231 and E232.

It belongs to the anthranilate phosphoribosyltransferase family. Homodimer. The cofactor is Mg(2+).

The catalysed reaction is N-(5-phospho-beta-D-ribosyl)anthranilate + diphosphate = 5-phospho-alpha-D-ribose 1-diphosphate + anthranilate. It functions in the pathway amino-acid biosynthesis; L-tryptophan biosynthesis; L-tryptophan from chorismate: step 2/5. In terms of biological role, catalyzes the transfer of the phosphoribosyl group of 5-phosphorylribose-1-pyrophosphate (PRPP) to anthranilate to yield N-(5'-phosphoribosyl)-anthranilate (PRA). The chain is Anthranilate phosphoribosyltransferase from Pseudomonas syringae pv. syringae (strain B728a).